The following is a 114-amino-acid chain: DNA-directed RNA polymerases II, IV and V subunit 9B (114 aa).

Cys-7, Cys-10, Cys-29, Cys-32, Cys-76, Cys-79, Cys-103, and Cys-108 together coordinate Zn(2+). Residues 72-113 (KAVRCAKCQHGEAVFFQATARGEEGMTLFFVCCNPNCSHRWR) form a TFIIS-type zinc finger.

The protein belongs to the archaeal RpoM/eukaryotic RPA12/RPB9/RPC11 RNA polymerase family. As to quaternary structure, component of the RNA polymerase II, IV and V complexes. Interacts with NRPD1.

The protein resides in the nucleus. It localises to the nucleolus. Functionally, DNA-dependent RNA polymerase catalyzes the transcription of DNA into RNA using the four ribonucleoside triphosphates as substrates. Component of RNA polymerase II which synthesizes mRNA precursors and many functional non-coding RNAs. Pol II is the central component of the basal RNA polymerase II transcription machinery. It is composed of mobile elements that move relative to each other. Component of RNA polymerases IV and V which mediate short-interfering RNAs (siRNA) accumulation and subsequent RNA-directed DNA methylation-dependent (RdDM) transcriptional gene silencing (TGS) of endogenous repeated sequences, including transposable elements. Required for RNA silencing. In Arabidopsis thaliana (Mouse-ear cress), this protein is DNA-directed RNA polymerases II, IV and V subunit 9B (NRPB9B).